Reading from the N-terminus, the 341-residue chain is Ribosomal RNA small subunit methyltransferase H (341 aa).

Residues 47–49, Asp64, Phe91, Asp109, and Gln116 contribute to the S-adenosyl-L-methionine site; that span reads GGY. Residues 292 to 318 are disordered; that stretch reads VAASEDEASRNPRARSAKLRAGVRTPA.

It belongs to the methyltransferase superfamily. RsmH family.

The protein localises to the cytoplasm. It carries out the reaction cytidine(1402) in 16S rRNA + S-adenosyl-L-methionine = N(4)-methylcytidine(1402) in 16S rRNA + S-adenosyl-L-homocysteine + H(+). Functionally, specifically methylates the N4 position of cytidine in position 1402 (C1402) of 16S rRNA. This Sinorhizobium fredii (strain NBRC 101917 / NGR234) protein is Ribosomal RNA small subunit methyltransferase H.